We begin with the raw amino-acid sequence, 193 residues long: Potassium-transporting ATPase KdpC subunit (193 aa).

The helical transmembrane segment at 14–34 (ITFTFLVLCGLVYPLIVTGIA) threads the bilayer.

The protein belongs to the KdpC family. As to quaternary structure, the system is composed of three essential subunits: KdpA, KdpB and KdpC.

It is found in the cell membrane. Functionally, part of the high-affinity ATP-driven potassium transport (or Kdp) system, which catalyzes the hydrolysis of ATP coupled with the electrogenic transport of potassium into the cytoplasm. This subunit acts as a catalytic chaperone that increases the ATP-binding affinity of the ATP-hydrolyzing subunit KdpB by the formation of a transient KdpB/KdpC/ATP ternary complex. The polypeptide is Potassium-transporting ATPase KdpC subunit (Bacillus cereus (strain ATCC 10987 / NRS 248)).